A 152-amino-acid chain; its full sequence is NADH-quinone oxidoreductase subunit A 2 (152 aa).

Transmembrane regions (helical) follow at residues 8 to 28 (FGKV…GYVS), 63 to 83 (FYVV…LFPW), and 90 to 110 (LGGF…LGLV).

This sequence belongs to the complex I subunit 3 family. In terms of assembly, NDH-1 is composed of 14 different subunits. Subunits NuoA, H, J, K, L, M, N constitute the membrane sector of the complex.

It is found in the cell inner membrane. It carries out the reaction a quinone + NADH + 5 H(+)(in) = a quinol + NAD(+) + 4 H(+)(out). Functionally, NDH-1 shuttles electrons from NADH, via FMN and iron-sulfur (Fe-S) centers, to quinones in the respiratory chain. The immediate electron acceptor for the enzyme in this species is believed to be a menaquinone. Couples the redox reaction to proton translocation (for every two electrons transferred, four hydrogen ions are translocated across the cytoplasmic membrane), and thus conserves the redox energy in a proton gradient. This chain is NADH-quinone oxidoreductase subunit A 2, found in Chloroherpeton thalassium (strain ATCC 35110 / GB-78).